A 303-amino-acid chain; its full sequence is Elongation factor Ts (303 aa).

Residues 81 to 84 form an involved in Mg(2+) ion dislocation from EF-Tu region; it reads TDFV.

This sequence belongs to the EF-Ts family.

The protein resides in the cytoplasm. Functionally, associates with the EF-Tu.GDP complex and induces the exchange of GDP to GTP. It remains bound to the aminoacyl-tRNA.EF-Tu.GTP complex up to the GTP hydrolysis stage on the ribosome. In Mesomycoplasma hyopneumoniae (strain J / ATCC 25934 / NCTC 10110) (Mycoplasma hyopneumoniae), this protein is Elongation factor Ts.